The sequence spans 155 residues: Aspartate 1-decarboxylase (155 aa).

The active-site Schiff-base intermediate with substrate; via pyruvic acid is Ser-24. Ser-24 bears the Pyruvic acid (Ser) mark. Residue Thr-56 coordinates substrate. Residue Tyr-57 is the Proton donor of the active site. 72 to 74 provides a ligand contact to substrate; that stretch reads GAA.

This sequence belongs to the PanD family. As to quaternary structure, heterooctamer of four alpha and four beta subunits. Pyruvate is required as a cofactor. Is synthesized initially as an inactive proenzyme, which is activated by self-cleavage at a specific serine bond to produce a beta-subunit with a hydroxyl group at its C-terminus and an alpha-subunit with a pyruvoyl group at its N-terminus.

The protein localises to the cytoplasm. It carries out the reaction L-aspartate + H(+) = beta-alanine + CO2. The protein operates within cofactor biosynthesis; (R)-pantothenate biosynthesis; beta-alanine from L-aspartate: step 1/1. Its function is as follows. Catalyzes the pyruvoyl-dependent decarboxylation of aspartate to produce beta-alanine. This is Aspartate 1-decarboxylase from Agrobacterium fabrum (strain C58 / ATCC 33970) (Agrobacterium tumefaciens (strain C58)).